A 273-amino-acid polypeptide reads, in one-letter code: NADPH-dependent 7-cyano-7-deazaguanine reductase (273 aa).

Residue 81-83 participates in substrate binding; that stretch reads VES. Residue 83-84 participates in NADPH binding; sequence SK. Cys179 acts as the Thioimide intermediate in catalysis. Catalysis depends on Asp186, which acts as the Proton donor. 218 to 219 contributes to the substrate binding site; it reads AE. 247-248 is a binding site for NADPH; it reads RG.

This sequence belongs to the GTP cyclohydrolase I family. QueF type 2 subfamily. Homodimer.

It is found in the cytoplasm. The enzyme catalyses 7-aminomethyl-7-carbaguanine + 2 NADP(+) = 7-cyano-7-deazaguanine + 2 NADPH + 3 H(+). It participates in tRNA modification; tRNA-queuosine biosynthesis. Its function is as follows. Catalyzes the NADPH-dependent reduction of 7-cyano-7-deazaguanine (preQ0) to 7-aminomethyl-7-deazaguanine (preQ1). The chain is NADPH-dependent 7-cyano-7-deazaguanine reductase from Rickettsia prowazekii (strain Madrid E).